The sequence spans 270 residues: Phosphonoacetaldehyde hydrolase (270 aa).

Aspartate 11 functions as the Nucleophile in the catalytic mechanism. Residues aspartate 11 and alanine 13 each coordinate Mg(2+). Lysine 53 acts as the Schiff-base intermediate with substrate in catalysis. Aspartate 187 is a Mg(2+) binding site.

Belongs to the HAD-like hydrolase superfamily. PhnX family. Homodimer. Requires Mg(2+) as cofactor.

It catalyses the reaction phosphonoacetaldehyde + H2O = acetaldehyde + phosphate + H(+). In terms of biological role, involved in phosphonate degradation. The polypeptide is Phosphonoacetaldehyde hydrolase (Salmonella paratyphi C (strain RKS4594)).